The following is a 190-amino-acid chain: Mitochondrial inner membrane protease subunit 1 (190 aa).

Active-site residues include Ser-40 and Lys-84.

The protein belongs to the peptidase S26 family. IMP1 subfamily. In terms of assembly, component of the mitochondrial inner membrane peptidase (IMP) complex which at least consists of IMP1, IMP2 and SOM1.

The protein resides in the mitochondrion inner membrane. Its function is as follows. Catalytic component of the mitochondrial inner membrane peptidase (IMP) complex. IMP catalyzes the removal of signal peptides required for the targeting of proteins from the mitochondrial matrix, across the inner membrane, into the inter-membrane space. The two catalytic IMP subunits seem to have non-overlapping substrate specificities. IMP1 substrates include nuclear encoded CYB2, mitochondrially encoded COX2, NADH-cytochrome b5 reductase and GUT2. This Saccharomyces cerevisiae (strain ATCC 204508 / S288c) (Baker's yeast) protein is Mitochondrial inner membrane protease subunit 1 (IMP1).